We begin with the raw amino-acid sequence, 83 residues long: Large ribosomal subunit protein bL31B (83 aa).

It belongs to the bacterial ribosomal protein bL31 family. Type B subfamily. As to quaternary structure, part of the 50S ribosomal subunit.

The polypeptide is Large ribosomal subunit protein bL31B (Lacticaseibacillus casei (strain BL23) (Lactobacillus casei)).